Here is a 96-residue protein sequence, read N- to C-terminus: Co-chaperonin GroES 2 (96 aa).

Belongs to the GroES chaperonin family. In terms of assembly, heptamer of 7 subunits arranged in a ring. Interacts with the chaperonin GroEL.

The protein resides in the cytoplasm. Together with the chaperonin GroEL, plays an essential role in assisting protein folding. The GroEL-GroES system forms a nano-cage that allows encapsulation of the non-native substrate proteins and provides a physical environment optimized to promote and accelerate protein folding. GroES binds to the apical surface of the GroEL ring, thereby capping the opening of the GroEL channel. This is Co-chaperonin GroES 2 from Vibrio parahaemolyticus serotype O3:K6 (strain RIMD 2210633).